The following is a 205-amino-acid chain: Outer-membrane lipoprotein LolB (205 aa).

The first 17 residues, 1-17, serve as a signal peptide directing secretion; sequence MFLRHCITFTLIALLAG. Cysteine 18 is lipidated: N-palmitoyl cysteine. Cysteine 18 carries the S-diacylglycerol cysteine lipid modification.

It belongs to the LolB family. In terms of assembly, monomer.

It is found in the cell outer membrane. In terms of biological role, plays a critical role in the incorporation of lipoproteins in the outer membrane after they are released by the LolA protein. This Pseudomonas putida (strain GB-1) protein is Outer-membrane lipoprotein LolB.